Reading from the N-terminus, the 405-residue chain is Na(+)-translocating NADH-quinone reductase subunit F (405 aa).

A helical membrane pass occupies residues 3–23 (IILGIVMFTVIVLVLALMILF). Residues 32–124 (GDITIKVNGE…DMDIEVPEEV (93 aa)) enclose the 2Fe-2S ferredoxin-type domain. Residues Cys-67, Cys-73, Cys-76, and Cys-108 each coordinate [2Fe-2S] cluster. An FAD-binding FR-type domain is found at 127–267 (VKKWECTVIS…SGPFGEFFAK (141 aa)). Residues 270–387 (DAEMVFIGGG…PIMNQSVIKM (118 aa)) are catalytic.

This sequence belongs to the NqrF family. In terms of assembly, composed of six subunits; NqrA, NqrB, NqrC, NqrD, NqrE and NqrF. It depends on [2Fe-2S] cluster as a cofactor. FAD serves as cofactor.

The protein resides in the cell inner membrane. It catalyses the reaction a ubiquinone + n Na(+)(in) + NADH + H(+) = a ubiquinol + n Na(+)(out) + NAD(+). NQR complex catalyzes the reduction of ubiquinone-1 to ubiquinol by two successive reactions, coupled with the transport of Na(+) ions from the cytoplasm to the periplasm. The first step is catalyzed by NqrF, which accepts electrons from NADH and reduces ubiquinone-1 to ubisemiquinone by a one-electron transfer pathway. The polypeptide is Na(+)-translocating NADH-quinone reductase subunit F (Neisseria meningitidis serogroup B (strain ATCC BAA-335 / MC58)).